We begin with the raw amino-acid sequence, 511 residues long: MKTALLSVSDKTGIVEFARGLVKADFRIISTGGTKKVLEEAGLSIVSVEAITNFPEMLDGRVKTLHPAIHGGLLARRDLPEHLAALKEHNIDLIDLVCVNLYPFKSTIMQNGVTEAEAIEQIDIGGPSMLRSAAKNFASVLPVVDPKDYQPVLAALAHQTDNVKFRRALALKVFQHTAAYDTLIAQYLGQNGEIFPDELTKTYTKKQVMRYGENSHQKAAFYEDALPVPFSIAQAQQLHGKELSYNNIKDADAALKMSAEFNQPAVVAVKHMNPCGIGLGQNIEEAWDRAYEADSMSIFGGIIVLNRPVDLATAEKMHKLFLEIIIAPSFEKEAFTVLAQKKNLRIMTVDFNQHQDAKELETVSVMGGLLVQEQDAVVETATDFKVVSKRQPTESELKAMVFGQTVVKHVKSNAIVITTDQQTLGIGAGQMNRIGSVEIAVKQAEGSANFKNAVMASDAFFPMEDCVEYAAKHGIKAIVEPGGSIKDQASIDKADELGISLIFSGRRHFRH.

Residues 1–144 (MKTALLSVSD…KNFASVLPVV (144 aa)) enclose the MGS-like domain.

This sequence belongs to the PurH family.

It carries out the reaction (6R)-10-formyltetrahydrofolate + 5-amino-1-(5-phospho-beta-D-ribosyl)imidazole-4-carboxamide = 5-formamido-1-(5-phospho-D-ribosyl)imidazole-4-carboxamide + (6S)-5,6,7,8-tetrahydrofolate. The enzyme catalyses IMP + H2O = 5-formamido-1-(5-phospho-D-ribosyl)imidazole-4-carboxamide. Its pathway is purine metabolism; IMP biosynthesis via de novo pathway; 5-formamido-1-(5-phospho-D-ribosyl)imidazole-4-carboxamide from 5-amino-1-(5-phospho-D-ribosyl)imidazole-4-carboxamide (10-formyl THF route): step 1/1. It participates in purine metabolism; IMP biosynthesis via de novo pathway; IMP from 5-formamido-1-(5-phospho-D-ribosyl)imidazole-4-carboxamide: step 1/1. This chain is Bifunctional purine biosynthesis protein PurH, found in Pediococcus pentosaceus (strain ATCC 25745 / CCUG 21536 / LMG 10740 / 183-1w).